We begin with the raw amino-acid sequence, 454 residues long: Toluate 1,2-dioxygenase subunit alpha (454 aa).

The Rieske domain occupies 51–148 (IYLAHESQIP…SFDCDGSHDL (98 aa)). [2Fe-2S] cluster contacts are provided by C92, H94, C112, and H115. Residues H221 and H226 each coordinate Fe cation.

The protein belongs to the bacterial ring-hydroxylating dioxygenase alpha subunit family. This dioxygenase system consists of three proteins: the two subunits of the hydroxylase component (XylX and XylY), and an electron transfer component (XylZ). [2Fe-2S] cluster is required as a cofactor. It depends on Fe cation as a cofactor.

Its pathway is xenobiotic degradation; toluene degradation. The protein is Toluate 1,2-dioxygenase subunit alpha (xylX) of Pseudomonas putida (Arthrobacter siderocapsulatus).